Consider the following 526-residue polypeptide: Peptide chain release factor 3 (526 aa).

Residues 11–277 (SKRRTFAIIS…SLIKWAPSPL (267 aa)) enclose the tr-type G domain. Residues 20–27 (SHPDAGKT), 88–92 (DTPGH), and 142–145 (NKLD) contribute to the GTP site.

This sequence belongs to the TRAFAC class translation factor GTPase superfamily. Classic translation factor GTPase family. PrfC subfamily.

The protein localises to the cytoplasm. In terms of biological role, increases the formation of ribosomal termination complexes and stimulates activities of RF-1 and RF-2. It binds guanine nucleotides and has strong preference for UGA stop codons. It may interact directly with the ribosome. The stimulation of RF-1 and RF-2 is significantly reduced by GTP and GDP, but not by GMP. The polypeptide is Peptide chain release factor 3 (prfC) (Buchnera aphidicola subsp. Acyrthosiphon pisum (strain APS) (Acyrthosiphon pisum symbiotic bacterium)).